Consider the following 125-residue polypeptide: MAVSKEEILETISNMTVMEVVELIEEMEEKFGVTAAAAVAAAPAAAGGEAEAAEEQTEFDVVLSSFGSNKVAVIKAVRGITGLGLKEAKEVVEGAPSPIKEGASKEEAEEIKAKLEEAGASVEVK.

It belongs to the bacterial ribosomal protein bL12 family. As to quaternary structure, homodimer. Part of the ribosomal stalk of the 50S ribosomal subunit. Forms a multimeric L10(L12)X complex, where L10 forms an elongated spine to which 2 to 4 L12 dimers bind in a sequential fashion. Binds GTP-bound translation factors.

In terms of biological role, forms part of the ribosomal stalk which helps the ribosome interact with GTP-bound translation factors. Is thus essential for accurate translation. This Alkalilimnicola ehrlichii (strain ATCC BAA-1101 / DSM 17681 / MLHE-1) protein is Large ribosomal subunit protein bL12.